A 442-amino-acid chain; its full sequence is Cation channel sperm-associated protein 4 (442 aa).

Residues 1-66 (MSEKHKWWQQ…TQMYIKQLLR (66 aa)) lie on the Cytoplasmic side of the membrane. Residues 67-88 (HPAFQLLLAFLLLSNAITIALR) form a helical membrane-spanning segment. The Extracellular segment spans residues 89-98 (TNSYLGQKHY). A helical transmembrane segment spans residues 99 to 125 (ELFSTIDDIVLTILICEVLLGWLNGFW). Residues 126-129 (IFWK) lie on the Cytoplasmic side of the membrane. The helical transmembrane segment at 130 to 153 (DGWNILNFAIVFILFMGFFIKQLD) threads the bilayer. At 154–156 (MVA) the chain is on the extracellular side. The helical transmembrane segment at 157 to 175 (ITYPLRVLRLVHVCMAVEP) threads the bilayer. The Cytoplasmic segment spans residues 176-188 (LARIIKVILQSMP). A helical membrane pass occupies residues 189 to 212 (DLANVMALILFFMLVFSVFGVTLF). At 213 to 222 (GAFVPKHFQN) the chain is on the extracellular side. The helical; Pore-forming intramembrane region spans 223–234 (MGVALYTLFICI). The Extracellular portion of the chain corresponds to 235–255 (TQDGWLDIYTDFQMDEREYAM). A helical transmembrane segment spans residues 256 to 283 (EVGGAIYFAVFITLGAFIGLNLFVVVVT). The Cytoplasmic segment spans residues 284–442 (TNLEQMMKTG…NMVNKHKFSH (159 aa)).

It belongs to the cation channel sperm-associated (TC 1.A.1.19) family. As to quaternary structure, component of the CatSper complex or CatSpermasome composed of the core pore-forming members CATSPER1, CATSPER2, CATSPER3 and CATSPER4 as well as auxiliary members CATSPERB, CATSPERG2, CATSPERD, CATSPERE, CATSPERZ, C2CD6/CATSPERT, SLCO6C1, TMEM249, TMEM262 and EFCAB9. HSPA1 may be an additional auxiliary complex member. The core complex members CATSPER1, CATSPER2, CATSPER3 and CATSPER4 form a heterotetrameric channel. The auxiliary CATSPERB, CATSPERG2, CATSPERD and CATSPERE subunits form a pavilion-like structure over the pore which stabilizes the complex through interactions with CATSPER4, CATSPER3, CATSPER1 and CATSPER2 respectively. SLCO6C1 interacts with CATSPERE and TMEM262/CATSPERH interacts with CATSPERB, further stabilizing the complex. C2CD6/CATSPERT interacts at least with CATSPERD and is required for targeting the CatSper complex in the flagellar membrane. As to expression, testis-specific.

The protein localises to the cell projection. Its subcellular location is the cilium. It localises to the flagellum membrane. The catalysed reaction is Ca(2+)(in) = Ca(2+)(out). In contrast to the human ortholog, not activated by progesterone. Activated by intracellular alkalinization. In terms of biological role, pore-forming subunit of the CatSper complex, a sperm-specific voltage-gated calcium channel that plays a central role in sperm cell hyperactivation. Controls calcium entry to mediate the hyperactivated motility, a step needed for sperm motility which is essential late in the preparation of sperm for fertilization. In Mus musculus (Mouse), this protein is Cation channel sperm-associated protein 4 (Catsper4).